The primary structure comprises 162 residues: Blue copper protein 1b (162 aa).

The N-terminal stretch at 1–23 (MASSRVVLILSISMVLLSSVAIA) is a signal peptide. One can recognise a Phytocyanin domain in the interval 25-125 (TDYIVGDDKG…QMKLVITVLA (101 aa)). Cu cation is bound at residue histidine 65. N-linked (GlcNAc...) asparagine glycosylation is present at asparagine 71. Cysteine 78 and cysteine 112 are joined by a disulfide. Cu cation-binding residues include cysteine 106, histidine 111, and methionine 117. A helical transmembrane segment spans residues 142–162 (VVSSLFGVVMAIMVAIAVIFA).

It localises to the membrane. The polypeptide is Blue copper protein 1b (Medicago truncatula (Barrel medic)).